Consider the following 602-residue polypeptide: MAAVSVFPGVRLLSIGDANGEIQRHAEQRELRLEARAGDIALYNAENVCVFKCTITRDTECSRVGKQSFIVTLGCNSVLVQFATPADFCSFYNIIKSCRCPATERSVFSERTEESSAVQYFQFYGYLSQQQNMMQDYVRTGTYQRAILQNHTDFKDKVVLDVGCGSGILSFFAVQAGARKVYAVEASSMAQHAELLVKSNNLTDRVVVIPGKVEEISLPEQVDMIISEPMGYMLFNERMLESYLHAKKFLKPNGNMFPTIGDVHLAPFTDEQLYMEQFTKANFWYQPSFHGVDLSALRGAAVDEYFKQPIVDTFDIRILMAKSVKYTVNFLDAKETDLHRIEIPFSFHMLHSGLVHGLAFWFDVAFIGSIMTVWLSTAPTEPLTHWYQVRCLLQSPIFTKAGDTLSGTVLLIANKKQSYDISIVAQVDQTGSKSSNLLDLKNPFFRYTGSAPSPPPGSHYSSPSENMWNTGGAYTMNTGMGMGGMPTAYDLSSVIGGSSGISHSNLIPLGEPPAVSCPPAPLHSEPQDLTLGTSTNTGIVNHTHSRMGSIMSTGIVQGSAGGQAASNSSSHYPVNNQFTMGGPAISMASPMSITTNTMHYGS.

The 308-residue stretch at 117–424 (AVQYFQFYGY…KKQSYDISIV (308 aa)) folds into the SAM-dependent MTase PRMT-type domain. 6 residues coordinate S-adenosyl-L-methionine: Q130, R139, G163, E185, E214, and S242. The segment at 470 to 602 (TGGAYTMNTG…ITTNTMHYGS (133 aa)) is transactivation domain.

This sequence belongs to the class I-like SAM-binding methyltransferase superfamily. Protein arginine N-methyltransferase family. Homodimer.

It localises to the nucleus. Its subcellular location is the cytoplasm. The protein resides in the chromosome. The enzyme catalyses L-arginyl-[protein] + 2 S-adenosyl-L-methionine = N(omega),N(omega)-dimethyl-L-arginyl-[protein] + 2 S-adenosyl-L-homocysteine + 2 H(+). Functionally, methylates (mono- and asymmetric dimethylation) the guanidino nitrogens of arginyl residues in several proteins involved in DNA packaging, transcription regulation, pre-mRNA splicing, and mRNA stability. Recruited to promoters upon gene activation together with histone acetyltransferases from EP300/P300 and p160 families, methylates histone H3 at 'Arg-17' (H3R17me) and activates transcription via chromatin remodeling. This chain is Histone-arginine methyltransferase CARM1 (carm1), found in Xenopus laevis (African clawed frog).